Reading from the N-terminus, the 279-residue chain is Type II iodothyronine deiodinase (279 aa).

The Lumenal portion of the chain corresponds to 1–7 (MGLLSAD). Residues 8–28 (LLITLQILPVFFSNCLFLALY) form a helical; Signal-anchor for type III membrane protein membrane-spanning segment. Residues 29-279 (DSVILLKHMV…TEDLSTDVSL (251 aa)) lie on the Cytoplasmic side of the membrane. Sec132 is an active-site residue. 2 non-standard amino acids (selenocysteine) are found at residues Sec132 and Sec265.

Belongs to the iodothyronine deiodinase family. As to quaternary structure, predominantly monomer. Can form homodimers but homodimerization is not essential for enzyme activity. Highly expressed in liver and in various parts of the brain including telencephalon, hippocampus, cerebellum, and brain stem, and weakly expressed in thyroid, lung, and small intestine. Not detected in skeletal muscle, heart atria or ventricle, gizzard or kidney.

It is found in the endoplasmic reticulum membrane. The catalysed reaction is 3,3',5-triiodo-L-thyronine + iodide + A + H(+) = L-thyroxine + AH2. It carries out the reaction 3,3'-diiodo-L-thyronine + iodide + A + H(+) = 3,3',5'-triiodo-L-thyronine + AH2. It catalyses the reaction 3'-iodo-L-thyronine + iodide + A + H(+) = 3',5'-diiodo-L-thyronine + AH2. The enzyme catalyses 3,3'-diiodothyronamine + iodide + A + H(+) = 3,3',5'-triiodothyronamine + AH2. The catalysed reaction is 3'-iodothyronamine + iodide + A + H(+) = 3',5'-diiodothyronamine + AH2. With respect to regulation, not inhibited by N(6)-propylthiouracil. Functionally, plays a crucial role in the metabolism of thyroid hormones (TH) and has specific roles in TH activation and inactivation by deiodination. Catalyzes the deiodination of L-thyroxine (T4) to 3,5,3'-triiodothyronine (T3) and 3,3',5'-triiodothyronine (rT3) to 3,3'-diiodothyronine (3,3'-T2) via outer-ring deiodination (ORD). Catalyzes the deiodination of 3',5'-diiodothyronine (3',5'-T2) to 3'-monoiodothyronine (3'-T1) via ORD. Catalyzes the phenolic ring deiodinations of 3,3',5'-triiodothyronamine and 3',5'- diiodothyronamine. In Gallus gallus (Chicken), this protein is Type II iodothyronine deiodinase (DIO2).